We begin with the raw amino-acid sequence, 872 residues long: Alanine--tRNA ligase (872 aa).

Residues histidine 563, histidine 567, cysteine 665, and histidine 669 each contribute to the Zn(2+) site.

This sequence belongs to the class-II aminoacyl-tRNA synthetase family. It depends on Zn(2+) as a cofactor.

The protein resides in the cytoplasm. The catalysed reaction is tRNA(Ala) + L-alanine + ATP = L-alanyl-tRNA(Ala) + AMP + diphosphate. Functionally, catalyzes the attachment of alanine to tRNA(Ala) in a two-step reaction: alanine is first activated by ATP to form Ala-AMP and then transferred to the acceptor end of tRNA(Ala). Also edits incorrectly charged Ser-tRNA(Ala) and Gly-tRNA(Ala) via its editing domain. The chain is Alanine--tRNA ligase from Bacteroides fragilis (strain ATCC 25285 / DSM 2151 / CCUG 4856 / JCM 11019 / LMG 10263 / NCTC 9343 / Onslow / VPI 2553 / EN-2).